Here is a 176-residue protein sequence, read N- to C-terminus: Transcription factor E (176 aa).

Residues glutamate 8–proline 90 enclose the HTH TFE/IIEalpha-type domain.

Belongs to the TFE family. Monomer. Interaction with RNA polymerase subunits RpoF and RpoE is necessary for Tfe stimulatory transcription activity. Able to interact with Tbp and RNA polymerase in the absence of DNA promoter. Interacts both with the preinitiation and elongation complexes.

In terms of biological role, transcription factor that plays a role in the activation of archaeal genes transcribed by RNA polymerase. Facilitates transcription initiation by enhancing TATA-box recognition by TATA-box-binding protein (Tbp), and transcription factor B (Tfb) and RNA polymerase recruitment. Not absolutely required for transcription in vitro, but particularly important in cases where Tbp or Tfb function is not optimal. It dynamically alters the nucleic acid-binding properties of RNA polymerases by stabilizing the initiation complex and destabilizing elongation complexes. Seems to translocate with the RNA polymerase following initiation and acts by binding to the non template strand of the transcription bubble in elongation complexes. In Haloarcula marismortui (strain ATCC 43049 / DSM 3752 / JCM 8966 / VKM B-1809) (Halobacterium marismortui), this protein is Transcription factor E.